A 180-amino-acid polypeptide reads, in one-letter code: Large ribosomal subunit protein uL5 (180 aa).

It belongs to the universal ribosomal protein uL5 family. Part of the 50S ribosomal subunit; part of the 5S rRNA/L5/L18/L25 subcomplex. Contacts the 5S rRNA and the P site tRNA. Forms a bridge to the 30S subunit in the 70S ribosome.

In terms of biological role, this is one of the proteins that bind and probably mediate the attachment of the 5S RNA into the large ribosomal subunit, where it forms part of the central protuberance. In the 70S ribosome it contacts protein S13 of the 30S subunit (bridge B1b), connecting the 2 subunits; this bridge is implicated in subunit movement. Contacts the P site tRNA; the 5S rRNA and some of its associated proteins might help stabilize positioning of ribosome-bound tRNAs. The protein is Large ribosomal subunit protein uL5 of Anaeromyxobacter sp. (strain Fw109-5).